Here is a 1516-residue protein sequence, read N- to C-terminus: UDP-glucose:glycoprotein glucosyltransferase 2 (1516 aa).

The first 27 residues, 1-27 (MAPAKATNVVRLLLGSTALWLSQLGSG), serve as a signal peptide directing secretion. N-linked (GlcNAc...) asparagine glycans are attached at residues Asn256, Asn286, Asn920, and Asn950. The interval 1220–1516 (LHKENKKEKD…QDTILTHDEL (297 aa)) is glucosyltransferase. Phosphotyrosine is present on Tyr1289. The short motif at 1513–1516 (HDEL) is the Prevents secretion from ER element.

Belongs to the glycosyltransferase 8 family. Interacts with METTL23. Interacts with SELENOF. Requires Ca(2+) as cofactor. The cofactor is Mn(2+). As to expression, higher levels in kidney, pancreas, heart, and skeletal muscle.

Its subcellular location is the endoplasmic reticulum lumen. It is found in the endoplasmic reticulum-Golgi intermediate compartment. The catalysed reaction is N(4)-(alpha-D-Man-(1-&gt;2)-alpha-D-Man-(1-&gt;2)-alpha-D-Man-(1-&gt;3)-[alpha-D-Man-(1-&gt;2)-alpha-D-Man-(1-&gt;3)-[alpha-D-Man-(1-&gt;2)-alpha-D-Man-(1-&gt;6)]-alpha-D-Man-(1-&gt;6)]-beta-D-Man-(1-&gt;4)-beta-D-GlcNAc-(1-&gt;4)-beta-D-GlcNAc)-L-asparaginyl-[protein] (N-glucan mannose isomer 9A1,2,3B1,2,3) + UDP-alpha-D-glucose = N(4)-(alpha-D-Glc-(1-&gt;3)-alpha-D-Man-(1-&gt;2)-alpha-D-Man-(1-&gt;2)-alpha-D-Man-(1-&gt;3)-[alpha-D-Man-(1-&gt;2)-alpha-D-Man-(1-&gt;3)-[alpha-D-Man-(1-&gt;2)-alpha-D-Man-(1-&gt;6)]-alpha-D-Man-(1-&gt;6)]-beta-D-Man-(1-&gt;4)-beta-D-GlcNAc-(1-&gt;4)-beta-D-GlcNAc)-L-asparaginyl-[protein] + UDP + H(+). It functions in the pathway protein modification; protein glycosylation. Ethylenediaminetetraacetic acid completely abolishes catalytic activity. Catalytic activity is enhanced by complex formation with SELENOF. Functionally, recognizes glycoproteins with minor folding defects. Reglucosylates single N-glycans near the misfolded part of the protein, thus providing quality control for protein folding in the endoplasmic reticulum. Reglucosylated proteins are recognized by calreticulin for recycling to the endoplasmic reticulum and refolding or degradation. This chain is UDP-glucose:glycoprotein glucosyltransferase 2 (UGGT2), found in Homo sapiens (Human).